The primary structure comprises 138 residues: Large ribosomal subunit protein uL16 (138 aa).

A compositionally biased stretch (basic residues) spans 1-17 (MLIPRKVKHRKQHHPRQ). Residues 1–22 (MLIPRKVKHRKQHHPRQRGIAS) form a disordered region.

It belongs to the universal ribosomal protein uL16 family. Part of the 50S ribosomal subunit.

In terms of biological role, binds 23S rRNA and is also seen to make contacts with the A and possibly P site tRNAs. In Mycobacterium tuberculosis (strain ATCC 25177 / H37Ra), this protein is Large ribosomal subunit protein uL16.